The chain runs to 276 residues: Acyl-[acyl-carrier-protein]--UDP-N-acetylglucosamine O-acyltransferase (276 aa).

It belongs to the transferase hexapeptide repeat family. LpxA subfamily. Homotrimer.

Its subcellular location is the cytoplasm. It catalyses the reaction a (3R)-hydroxyacyl-[ACP] + UDP-N-acetyl-alpha-D-glucosamine = a UDP-3-O-[(3R)-3-hydroxyacyl]-N-acetyl-alpha-D-glucosamine + holo-[ACP]. It participates in glycolipid biosynthesis; lipid IV(A) biosynthesis; lipid IV(A) from (3R)-3-hydroxytetradecanoyl-[acyl-carrier-protein] and UDP-N-acetyl-alpha-D-glucosamine: step 1/6. Involved in the biosynthesis of lipid A, a phosphorylated glycolipid that anchors the lipopolysaccharide to the outer membrane of the cell. This Rippkaea orientalis (strain PCC 8801 / RF-1) (Cyanothece sp. (strain PCC 8801)) protein is Acyl-[acyl-carrier-protein]--UDP-N-acetylglucosamine O-acyltransferase.